We begin with the raw amino-acid sequence, 831 residues long: Translation initiation factor IF-2 (831 aa).

In terms of domain architecture, tr-type G spans 329-499 (TRAPVVTVMG…LLIAEMQDLK (171 aa)). The segment at 338–345 (GHVDHGKT) is G1. GTP is bound at residue 338–345 (GHVDHGKT). Residues 363 to 367 (GITQH) are G2. The interval 385 to 388 (DTPG) is G3. GTP-binding positions include 385-389 (DTPGH) and 439-442 (NKID). A G4 region spans residues 439-442 (NKID). The interval 475 to 477 (SAL) is G5.

It belongs to the TRAFAC class translation factor GTPase superfamily. Classic translation factor GTPase family. IF-2 subfamily.

The protein localises to the cytoplasm. In terms of biological role, one of the essential components for the initiation of protein synthesis. Protects formylmethionyl-tRNA from spontaneous hydrolysis and promotes its binding to the 30S ribosomal subunits. Also involved in the hydrolysis of GTP during the formation of the 70S ribosomal complex. The chain is Translation initiation factor IF-2 from Rickettsia rickettsii (strain Iowa).